Here is a 187-residue protein sequence, read N- to C-terminus: Interferon beta (187 aa).

The signal sequence occupies residues 1–21 (MTSRSLLPFVLSLLLPRIIMA). Residue Tyr24 is modified to Phosphotyrosine. Cys53 and Cys162 are oxidised to a cystine. N-linked (GlcNAc...) asparagine glycosylation is found at Asn76, Asn95, Asn132, and Asn158.

The protein belongs to the alpha/beta interferon family. In terms of assembly, monomer.

It localises to the secreted. Its function is as follows. Type I interferon cytokine that plays a key role in the innate immune response to infection, developing tumors and other inflammatory stimuli. Signals via binding to high-affinity (IFNAR2) and low-affinity (IFNAR1) heterodimeric receptor, activating the canonical Jak-STAT signaling pathway resulting in transcriptional activation or repression of interferon-regulated genes that encode the effectors of the interferon response, such as antiviral proteins, regulators of cell proliferation and differentiation, and immunoregulatory proteins. Signals mostly via binding to a IFNAR1-IFNAR2 heterodimeric receptor, but can also function with IFNAR1 alone and independently of Jak-STAT pathways. Elicits a wide variety of responses, including antiviral and antibacterial activities, and can regulate the development of B-cells, myelopoiesis and lipopolysaccharide (LPS)-inducible production of tumor necrosis factor. Plays a role in neuronal homeostasis by regulating dopamine turnover and protecting dopaminergic neurons: acts by promoting neuronal autophagy and alpha-synuclein clearance, thereby preventing dopaminergic neuron loss. IFNB1 is more potent than interferon-alpha (IFN-alpha) in inducing the apoptotic and antiproliferative pathways required for control of tumor cell growth. This Tachyglossus aculeatus aculeatus (Southeast Australian short-beaked echidna) protein is Interferon beta (IFNB1).